The primary structure comprises 662 residues: MFNEKDQLAVDTLRALSIDTIEKANSGHPGLPMGAAPMAYTLWTRHLNFNPQSKDYFNRDRFVLSAGHGSALLYSLLHVSGSLELEELKQFRQWGSKTPGHPEYRHTDGVEVTTGPLGQGFSMSVGLALAEDHLAGKFNKEGYNVVDHYTYVLASDGDLMEGISHEAASFAGHNKLSKLVVLYDSNDISLDGELNKAFSENTKARFEAYGWNYLLVKDGNDLEEIDKAITTAKSQEGPTIIEVKTTIGFGSPNKAGTNGVHGAPLGEDERKLTFENYGLDPEKRFNVSEEVYEIFQNTMLKRANEDESQWNSLLEKYAETYPELAEEFKLAISGKLPKNYKDELPRFEFGHNGASRADSGTVIQAISKTVPSFFGGSADLAGSNKSNVNDATDYSSETPEGKNVWFGVREFAMGAAVNGMAAHGGLHPYGATFFVFSDYLKPALRLSSIMGLNATFIFTHDSIAVGEDGPTHEPIEQLAGLRAIPNMNVIRPADGNETRVAWEVALESESTPTSLVLTRQNLPVLDVPEDVVEEGVRKGAYTVYGSEETPEFLLLASGSEVSLAVEAAKDLEKQGKSVRVVSMPNWNAFEQQSEEYKESVIPSSVTKRVAIEMASPLGWHKYVGTAGKVIAIDGFGASAPGDLVVEKYGFTKENILNQVMSL.

Position 28 (histidine 28) interacts with substrate. Thiamine diphosphate-binding positions include histidine 68 and 115 to 117; that span reads GPL. Aspartate 156 is a binding site for Mg(2+). 2 residues coordinate thiamine diphosphate: glycine 157 and asparagine 186. Mg(2+) contacts are provided by asparagine 186 and isoleucine 188. 3 residues coordinate substrate: histidine 261, arginine 356, and serine 383. Residue histidine 261 participates in thiamine diphosphate binding. The active-site Proton donor is the glutamate 410. Phenylalanine 436 contacts thiamine diphosphate. Substrate-binding residues include histidine 460, aspartate 468, and arginine 519.

It belongs to the transketolase family. Homodimer. Requires Mg(2+) as cofactor. The cofactor is Ca(2+). Mn(2+) is required as a cofactor. Co(2+) serves as cofactor. It depends on thiamine diphosphate as a cofactor.

The enzyme catalyses D-sedoheptulose 7-phosphate + D-glyceraldehyde 3-phosphate = aldehydo-D-ribose 5-phosphate + D-xylulose 5-phosphate. The protein operates within carbohydrate biosynthesis; Calvin cycle. Its pathway is carbohydrate degradation; pentose phosphate pathway. Its function is as follows. Catalyzes the transfer of a two-carbon ketol group from a ketose donor to an aldose acceptor, via a covalent intermediate with the cofactor thiamine pyrophosphate. In Staphylococcus aureus (strain MRSA252), this protein is Transketolase (tkt).